We begin with the raw amino-acid sequence, 86 residues long: Synergistic-like venom protein (86 aa).

A signal peptide spans 1-21; it reads MKTLLLTLVVVTIVCLDLGYT. 4 cysteine pairs are disulfide-bonded: C24-C45, C38-C63, C67-C78, and C79-C84.

This sequence belongs to the three-finger toxin family. Short-chain subfamily. Aminergic toxin sub-subfamily. Expressed by the venom gland.

It localises to the secreted. The polypeptide is Synergistic-like venom protein (Dendroaspis angusticeps (Eastern green mamba)).